The following is an 813-amino-acid chain: Sodium/hydrogen exchanger 2 (813 aa).

The next 7 helical transmembrane spans lie at 108 to 128, 139 to 159, 170 to 190, 210 to 230, 238 to 258, 279 to 299, and 309 to 329; these read IVPE…IIFG, TDVF…YFMP, IFWY…LSLF, LFGS…FENI, ILVF…YNLF, FFVV…IAAF, and VIEP…AEMF. Asparagine 351 carries N-linked (GlcNAc...) asparagine glycosylation. Transmembrane regions (helical) follow at residues 362–382, 393–413, 431–451, and 460–480; these read YFMK…MGVS, AFVC…VFVL, FIIA…FLLP, and LFIT…GITI. Positions 649-661 are enriched in basic and acidic residues; it reads LRKDNSLNRERRA. 2 disordered regions span residues 649 to 709 and 736 to 813; these read LRKD…NLQP and DVGS…NEKP. The segment covering 687–696 has biased composition (polar residues); it reads VSNADGNSSD. 2 stretches are compositionally biased toward basic and acidic residues: residues 770 to 781 and 797 to 813; these read KDQRFGRGREDS and RASE…NEKP.

This sequence belongs to the monovalent cation:proton antiporter 1 (CPA1) transporter (TC 2.A.36) family. Interacts with CHP1 and CHP2. In terms of tissue distribution, predominantly in small intestine, colon, and stomach, with much lower levels in skeletal muscle, kidney, brain, testis, uterus, heart and lung.

The protein resides in the apical cell membrane. It catalyses the reaction Na(+)(in) + H(+)(out) = Na(+)(out) + H(+)(in). With respect to regulation, li(+) activates Na(+)/H(+) exchanger. Its function is as follows. Plasma membrane Na(+)/H(+) antiporter. Mediates the electroneutral exchange of intracellular H(+) ions for extracellular Na(+). Major apical Na(+)/H(+) exchanger in the base of the colonic crypt. Controls in the colonic crypt intracellular pH (pHi) to direct colonic epithelial cell differentiation into the absorptive enterocyte lineage at the expense of the secretory lineage. The polypeptide is Sodium/hydrogen exchanger 2 (Slc9a2) (Rattus norvegicus (Rat)).